Here is a 384-residue protein sequence, read N- to C-terminus: MEDSPTMVKVDRGENQILSCRGRRCGFKVLGYVTGDMKEFANWLKDKPVVLQFMDWILRGISQVVFVSNPISGILILVGLLVQNPWWALCGCVGTVVSTLTALLLSQDRSAIAAGLQGYNATLVGILMAVFSNKGDYFWWLIFPVSAMSMTCPVFSSALSSVLSKWDLPVFTLPFNMALSMYLSATGHYNTFFPSKLFTPVSSVPNITWSELSALELLKSLPVGVGQIYGCDNPWTGGIFLCAILLSSPLMCLHAAIGSLLGVIAGLSLAAPFEDIYFGLWGFNSSLACIAIGGMFMALTWQTHLLALACALFTAYFGACMAHLMAVVHLPACTWSFCLATLLFLLLTTKNPNIYRMPLSKVTYSEENRIFYLQNKKRMVESPL.

Glutamate 39 is modified (phosphoserine). The next 5 membrane-spanning stretches (helical) occupy residues 61 to 81 (ISQV…VGLL), 85 to 105 (PWWA…ALLL), 111 to 131 (AIAA…MAVF), 138 to 158 (FWWL…FSSA), and 168 to 188 (LPVF…ATGH). Residue asparagine 206 is glycosylated (N-linked (GlcNAc...) asparagine). 4 consecutive transmembrane segments (helical) span residues 250-270 (LMCL…LSLA), 276-296 (IYFG…GGMF), 305-325 (LLAL…AHLM), and 327-347 (VVHL…FLLL).

The protein belongs to the urea transporter family. As to quaternary structure, homotrimer; each subunit contains a pore through which urea permeates. Identified in a complex with STOM. N-glycosylated in red blood cells, as well as in most non-erythroid tissues, except in the gastrocnemius muscle and in the gastrointestinal tract, including liver, colon and stomach. As to expression, expressed in brain, kidney, heart, liver, lung, skeletal muscle, spleen, testis, ureter and urinary bladder (at protein level). Along the gastrointestinal tract, detected in colon, jejunum and stomach (at protein level). In the kidney, expressed in some microvessels of the inner and outer medulla, but not all (at protein level). Not detected in the cortex (at protein level). Detected in the urothelium all along the urinary tract, including the papilla surface, the ureter, the bladder and the urethra (at protein level). In the brain, expressed at the border of the corpus callosum and striatum in astrocytic cellular processes surrounding blood microvessels (at protein level). Detected in erythrocytes (at protein level).

The protein resides in the cell membrane. Its subcellular location is the basolateral cell membrane. It carries out the reaction urea(in) = urea(out). Functionally, mediates the transport of urea driven by a concentration gradient across the cell membranes of erythrocytes and the renal inner medullary collecting duct which is critical to the urinary concentrating mechanism. Facilitates water transport in erythrocytes. The chain is Urea transporter 1 (Slc14a1) from Mus musculus (Mouse).